A 199-amino-acid chain; its full sequence is Adenylyl-sulfate kinase (199 aa).

34-41 lines the ATP pocket; sequence GLSGSGKS. Catalysis depends on serine 108, which acts as the Phosphoserine intermediate.

The protein belongs to the APS kinase family.

It carries out the reaction adenosine 5'-phosphosulfate + ATP = 3'-phosphoadenylyl sulfate + ADP + H(+). Its pathway is sulfur metabolism; hydrogen sulfide biosynthesis; sulfite from sulfate: step 2/3. Catalyzes the synthesis of activated sulfate. This chain is Adenylyl-sulfate kinase, found in Staphylococcus carnosus (strain TM300).